A 317-amino-acid chain; its full sequence is Methionyl-tRNA formyltransferase (317 aa).

110-113 (SLLP) serves as a coordination point for (6S)-5,6,7,8-tetrahydrofolate.

The protein belongs to the Fmt family.

The enzyme catalyses L-methionyl-tRNA(fMet) + (6R)-10-formyltetrahydrofolate = N-formyl-L-methionyl-tRNA(fMet) + (6S)-5,6,7,8-tetrahydrofolate + H(+). In terms of biological role, attaches a formyl group to the free amino group of methionyl-tRNA(fMet). The formyl group appears to play a dual role in the initiator identity of N-formylmethionyl-tRNA by promoting its recognition by IF2 and preventing the misappropriation of this tRNA by the elongation apparatus. The polypeptide is Methionyl-tRNA formyltransferase (Bacillus subtilis (strain 168)).